Reading from the N-terminus, the 1029-residue chain is Endosome/lysosome-associated apoptosis and autophagy regulator family member 2 (1029 aa).

The first 47 residues, 1–47 (MLFRARGPVRGRGWGRPAEAPRRGRSPPWSPAWICCWALAGCQAAWA), serve as a signal peptide directing secretion. The Extracellular segment spans residues 48–929 (GDLPSSSSRP…TCETVDFWLK (882 aa)). N-linked (GlcNAc...) asparagine glycosylation is present at N169. 3 disulfides stabilise this stretch: C293-C310, C323-C346, and C326-C358. N-linked (GlcNAc...) asparagine glycosylation is found at N405 and N691. In terms of domain architecture, MRH spans 672–877 (SDCFFYHEKE…LWESAEACPL (206 aa)). 4 disulfide bridges follow: C674/C720, C730/C758, C827/C863, and C839/C875. A helical membrane pass occupies residues 930–950 (VGAGVGAFTAVLLVALTCYFW). Residues 951-1029 (KKNQKLEYKY…QLKTSRSPNI (79 aa)) are Cytoplasmic-facing. Phosphoserine is present on S1018.

This sequence belongs to the ELAPOR family.

It localises to the cell membrane. Its function is as follows. Functions as a regulator of the BMP signaling pathway and may be involved in epidermal differentiation. This chain is Endosome/lysosome-associated apoptosis and autophagy regulator family member 2, found in Homo sapiens (Human).